The following is a 217-amino-acid chain: DNA-binding transcriptional activator DevR/DosR (217 aa).

Residues 3-119 (KVFLVDDHEV…ELARAVKDVG (117 aa)) enclose the Response regulatory domain. Aspartate 54 is subject to 4-aspartylphosphate. The region spanning 143-208 (KQDPLSGLTD…QAAVFATELK (66 aa)) is the HTH luxR-type domain. The segment at residues 167 to 186 (NKQIADRMFLAEKTVKNYVS) is a DNA-binding region (H-T-H motif). Phosphothreonine; by PknH is present on residues threonine 198 and threonine 205.

As to quaternary structure, homodimer. Interacts with NarL. Phosphorylated on Asp-54 by both DevS (DosS) and DosT. Phosphorylated on Thr-198 and Thr-205 by PknH, which enhances DevR dimerization. Aspartate phosphorylation and threonine phosphorylation cooperatively enhance DevR binding to DNA.

Its subcellular location is the cytoplasm. The protein resides in the host cytoplasmic vesicle. It localises to the host phagosome. Member of the two-component regulatory system DevR/DevS (also called DosR/DosS) involved in onset of the dormancy response. Regulates an approximately 48-member regulon. When phosphorylated binds and activates the promoter of DevR regulon genes in response to hypoxia. The presence of target DNA increases stability of phospho-DevR in vitro. Activates its own transcription under hypoxic but not aerobic conditions, probably binds as a dimer to tandem binding sites within the devR and hspX promoters. Accepts a phosphate group from DevS (DosS) and from DosT. Does not regulate transcription of dosT. The protein is DNA-binding transcriptional activator DevR/DosR of Mycobacterium tuberculosis (strain ATCC 25618 / H37Rv).